Here is a 178-residue protein sequence, read N- to C-terminus: Fatty-acid and retinol-binding protein 1 (178 aa).

An N-terminal signal peptide occupies residues 1 to 16 (MYHQLILLALIGTIMA). Coiled coils occupy residues 67–89 (DAAL…ELRN) and 129–154 (IKQA…LKVT).

Belongs to the fatty-acid and retinol-binding protein (FARBP) family. In terms of processing, not glycosylated.

The protein resides in the secreted. Binds retinol and different fatty acids. The chain is Fatty-acid and retinol-binding protein 1 from Loa loa (Eye worm).